The sequence spans 874 residues: SGGFDFSFLPQPPQEKGVGLGPGPMGLMGPRGPPGASGAPGPQGFQGPAGEPGEPGQTGPAGARGPAGPPGKGVVGPQGARGFPGTPGLPGFKGEPGAPGENGTPGQTGARGRVGAPGPAGARGSDGSVGPVGPAGPIGSAGPPGFPGAPGPKGELGPVGNTGPSGPAGPRGEQGLPGSGPVGPPGNPGANGLTGAKGAAGLPGVAGAPGLPGPRGIPGPVGARGLVGEPGPAGSKGESGGKGEPGSAGPQGPPGSSGEEGKRGPSGESGSTGPTGPPGLRGGLPGADGRAGVMGPAGRGASGPAGVRGPSGDTGRPGEPGLMGARGLPGSPGNVGPAGKEGPAGLPGIDGRPGPIGPAGARGEAGNIGFPGPKGHAGLAGNRGEQGPAGPPGFQGLPGPAGTTGEAGKPGERGIPGEFGLPGPAGPRGERGPPGESGAVGPSGAIGSRGPSGPPGPDGNKGEPGVVGAPGTAGPAGSGGLPGERGETGLRGEVGTTGRDGARGAPGAVGAPGPAGATGDRGEAGAAGPAGPAGPRGSPGERGEVGPAGPNGFAGPAGAAGQPGAKGERGTKGPKGENGIVGPTGPVGSAGPAGPNGPAGPAGSRGDGGPPGLTGFPGAAGRTGPPGPSGITGPPGPAGKEGLRGDQGPVGRGETGAGGPPGFTGEKGPSGEPGTAGPPGTAGPQGLLGAPGILGLPGSRGERGLPGVAGAVGEPGPLGIAGPPGARGDGNPGSDGPPGRGAAGAPGPHGTVGPAGKHGNRGEPGPVGSVGPVGALGPRGPSGPQGIRGLQGLPGLAGQHGDQGSPGPVGPAGPRGPAGPSGPAGKDGRTGHPGAVGPAGIRGSQGSQGPSGPAGPPGSGGGYDFGYEGDFYRA.

Positions 1 to 874 (SGGFDFSFLP…FGYEGDFYRA (874 aa)) are disordered. A 4-hydroxyproline mark is found at P10 and P13. Residue K16 is modified to Allysine. Low complexity predominate over residues 27–66 (LMGPRGPPGASGAPGPQGFQGPAGEPGEPGQTGPAGARGP). Residues P34 and P40 each carry the 4-hydroxyproline modification. A 5-hydroxylysine; alternate modification is found at K93. Residue K93 is glycosylated (O-linked (Gal...) hydroxylysine; alternate). 3 stretches are compositionally biased toward low complexity: residues 110-143 (ARGR…SAGP), 188-209 (PGAN…AGAP), and 218-236 (PGPV…AGSK). Residues 237-246 (GESGGKGEPG) show a composition bias toward gly residues. Residues 247–257 (SAGPQGPPGSS) show a composition bias toward low complexity. 4-hydroxyproline occurs at positions 317 and 320. Composition is skewed to low complexity over residues 346–365 (LPGI…RGEA), 434–451 (PGES…SRGP), and 463–473 (EPGVVGAPGTA). The span at 474–483 (GPAGSGGLPG) shows a compositional bias: gly residues. 2 stretches are compositionally biased toward low complexity: residues 491 to 538 (RGEV…PRGS) and 545 to 565 (VGPA…QPGA). Over residues 566–575 (KGERGTKGPK) the composition is skewed to basic and acidic residues. Residues 583–593 (PTGPVGSAGPA) are compositionally biased toward low complexity. Over residues 603 to 612 (GSRGDGGPPG) the composition is skewed to gly residues. The span at 614 to 623 (TGFPGAAGRT) shows a compositional bias: low complexity. The span at 648-662 (GPVGRGETGAGGPPG) shows a compositional bias: gly residues. 2 stretches are compositionally biased toward low complexity: residues 663-697 (FTGE…LGLP) and 705-724 (LPGV…AGPP). A compositionally biased stretch (gly residues) spans 725–744 (GARGDGNPGSDGPPGRGAAG). Low complexity-rich tracts occupy residues 745 to 755 (APGPHGTVGPA) and 763 to 778 (EPGP…ALGP).

It belongs to the fibrillar collagen family. Trimers of one alpha 2(I) and two alpha 1(I) chains. Interacts (via C-terminus) with TMEM131 (via PapD-L domain); the interaction is direct and is involved in assembly and TRAPPIII ER-to-Golgi transport complex-dependent secretion of collagen. In terms of processing, prolines at the third position of the tripeptide repeating unit (G-X-Y) are hydroxylated in some or all of the chains. As to expression, expressed in bones.

The protein localises to the secreted. It localises to the extracellular space. It is found in the extracellular matrix. In terms of biological role, type I collagen is a member of group I collagen (fibrillar forming collagen). The chain is Collagen alpha-2(I) chain from Megalonyx jeffersonii (Jefferson's ground sloth).